A 754-amino-acid polypeptide reads, in one-letter code: 5-methyltetrahydropteroyltriglutamate--homocysteine methyltransferase (754 aa).

5-methyltetrahydropteroyltri-L-glutamate contacts are provided by residues 15–18 (RELK) and Lys114. Residues 430–432 (IGS) and Glu483 each bind L-homocysteine. Residues 430–432 (IGS) and Glu483 each bind L-methionine. Residues 514–515 (RC) and Trp560 contribute to the 5-methyltetrahydropteroyltri-L-glutamate site. Position 598 (Asp598) interacts with L-homocysteine. Asp598 provides a ligand contact to L-methionine. Glu604 lines the 5-methyltetrahydropteroyltri-L-glutamate pocket. His641, Cys643, and Glu665 together coordinate Zn(2+). His694 functions as the Proton donor in the catalytic mechanism. Cys726 is a Zn(2+) binding site.

It belongs to the vitamin-B12 independent methionine synthase family. Requires Zn(2+) as cofactor.

It catalyses the reaction 5-methyltetrahydropteroyltri-L-glutamate + L-homocysteine = tetrahydropteroyltri-L-glutamate + L-methionine. It functions in the pathway amino-acid biosynthesis; L-methionine biosynthesis via de novo pathway; L-methionine from L-homocysteine (MetE route): step 1/1. Functionally, catalyzes the transfer of a methyl group from 5-methyltetrahydrofolate to homocysteine resulting in methionine formation. This Campylobacter jejuni subsp. jejuni serotype O:6 (strain 81116 / NCTC 11828) protein is 5-methyltetrahydropteroyltriglutamate--homocysteine methyltransferase.